The following is a 1106-amino-acid chain: Putative pre-mRNA-splicing factor ATP-dependent RNA helicase DHX16 (1106 aa).

3 disordered regions span residues 73–100 (KIQN…DKEK), 120–286 (DDIV…TKSR), and 366–394 (YIND…WEQN). A compositionally biased stretch (low complexity) spans 78–94 (TSSSSSSSSTSLSSSSS). The span at 138–155 (KRKKKEKKKEKKDKKDKK) shows a compositional bias: basic residues. Basic and acidic residues predominate over residues 156–167 (DKKSSTRKKSDN). Residues 189–201 (NNENNDNNNDNNN) are compositionally biased toward low complexity. The span at 232–283 (REQREVKELSDRIKKRDEKSTKKKIVDDSETKESIERKNRLEQNEQLETERT) shows a compositional bias: basic and acidic residues. The Helicase ATP-binding domain maps to 477-640 (IDAVREYQVL…FDGAPTFNIP (164 aa)). 490-497 (GETGSGKT) is an ATP binding site. The DEAH box motif lies at 587–590 (DEAH). Residues 665–838 (TVLQIHITEP…NVVLLLKSMG (174 aa)) form the Helicase C-terminal domain.

This sequence belongs to the DEAD box helicase family. DEAH subfamily. DDX16/PRP8 sub-subfamily. In terms of assembly, component of pre-catalytic spliceosome complexes.

It is found in the nucleus. The protein localises to the nucleoplasm. The enzyme catalyses ATP + H2O = ADP + phosphate + H(+). Its function is as follows. Required for pre-mRNA splicing as component of the spliceosome. Contributes to pre-mRNA splicing after spliceosome formation and prior to the first transesterification reaction. The sequence is that of Putative pre-mRNA-splicing factor ATP-dependent RNA helicase DHX16 (dhx16) from Dictyostelium discoideum (Social amoeba).